The primary structure comprises 115 residues: Pro-FMRFamide-related neuropeptide FF (115 aa).

The first 22 residues, 1–22 (MDARQAAALLLVLLLVTDWSHA), serve as a signal peptide directing secretion. Disordered stretches follow at residues 20–51 (SHAEGPGGRDGGDQIFMEEDSGAHPAQDAQTP) and 78–102 (FGRNTRGSWSNKRLSPRAGEGLSSP). A propeptide spanning residues 23–66 (EGPGGRDGGDQIFMEEDSGAHPAQDAQTPRSLLRSLLQAMQRPG) is cleaved from the precursor. Phenylalanine 78 carries the phenylalanine amide modification. The propeptide occupies 81–94 (NTRGSWSNKRLSPR). Phenylalanine 112 bears the Phenylalanine amide mark.

Belongs to the FARP (FMRFamide related peptide) family.

The protein localises to the secreted. In terms of biological role, morphine modulating peptides. Have wide-ranging physiologic effects, including the modulation of morphine-induced analgesia, elevation of arterial blood pressure, and increased somatostatin secretion from the pancreas. The neuropeptide FF potentiates and sensitizes ASIC3 cation channel. This is Pro-FMRFamide-related neuropeptide FF (NPFF) from Bos taurus (Bovine).